Reading from the N-terminus, the 473-residue chain is Aspartyl/glutamyl-tRNA(Asn/Gln) amidotransferase subunit B (473 aa).

The protein belongs to the GatB/GatE family. GatB subfamily. In terms of assembly, heterotrimer of A, B and C subunits.

It catalyses the reaction L-glutamyl-tRNA(Gln) + L-glutamine + ATP + H2O = L-glutaminyl-tRNA(Gln) + L-glutamate + ADP + phosphate + H(+). It carries out the reaction L-aspartyl-tRNA(Asn) + L-glutamine + ATP + H2O = L-asparaginyl-tRNA(Asn) + L-glutamate + ADP + phosphate + 2 H(+). Functionally, allows the formation of correctly charged Asn-tRNA(Asn) or Gln-tRNA(Gln) through the transamidation of misacylated Asp-tRNA(Asn) or Glu-tRNA(Gln) in organisms which lack either or both of asparaginyl-tRNA or glutaminyl-tRNA synthetases. The reaction takes place in the presence of glutamine and ATP through an activated phospho-Asp-tRNA(Asn) or phospho-Glu-tRNA(Gln). In Francisella tularensis subsp. tularensis (strain FSC 198), this protein is Aspartyl/glutamyl-tRNA(Asn/Gln) amidotransferase subunit B.